Reading from the N-terminus, the 371-residue chain is Probable beta-1,4-xylosyltransferase GT43A (371 aa).

Residues 1–19 (MGTAAVAAAERPKQRRSSH) are Cytoplasmic-facing. A helical; Signal-anchor for type II membrane protein membrane pass occupies residues 20–42 (LWKKALLHFSLCFVMGFFTGFAP). Residues 43 to 371 (SSSSSWRAGS…TSTPKTHNRR (329 aa)) are Lumenal-facing. N-linked (GlcNAc...) asparagine glycans are attached at residues Asn-176 and Asn-299.

It belongs to the glycosyltransferase 43 family.

It localises to the golgi apparatus membrane. Functionally, probable beta-1,4-xylosyltransferase involved in xylan biosynthesis in cell walls. This is Probable beta-1,4-xylosyltransferase GT43A from Oryza sativa subsp. japonica (Rice).